A 284-amino-acid polypeptide reads, in one-letter code: Putative ribosome biogenesis protein C306.07c (284 aa).

The tract at residues 264–284 (LKKSELRAQKRGSSGEGKGNK) is disordered.

This sequence belongs to the universal ribosomal protein uL1 family. Highly divergent. Component of the 90S pre-ribosomes.

It localises to the nucleus. Its subcellular location is the nucleolus. Involved in rRNA-processing and ribosome biosynthesis. This chain is Putative ribosome biogenesis protein C306.07c, found in Schizosaccharomyces pombe (strain 972 / ATCC 24843) (Fission yeast).